The following is a 437-amino-acid chain: UDP-N-acetylmuramate--L-alanine ligase (437 aa).

ATP is bound at residue 108–114 (GAHGKTS).

It belongs to the MurCDEF family.

It is found in the cytoplasm. The enzyme catalyses UDP-N-acetyl-alpha-D-muramate + L-alanine + ATP = UDP-N-acetyl-alpha-D-muramoyl-L-alanine + ADP + phosphate + H(+). It functions in the pathway cell wall biogenesis; peptidoglycan biosynthesis. In terms of biological role, cell wall formation. This is UDP-N-acetylmuramate--L-alanine ligase from Staphylococcus aureus.